Reading from the N-terminus, the 65-residue chain is Conotoxin Cal16.1 (65 aa).

An N-terminal signal peptide occupies residues 1-19; it reads MRCLSIFVLLVLLVSFAVA. A propeptide spanning residues 20–48 is cleaved from the precursor; the sequence is ELDVEGEIVKQLLTRGTLKDADFWKRLEM. Glutamine 49 is modified (pyrrolidone carboxylic acid). Intrachain disulfides connect cysteine 51/cysteine 60 and cysteine 53/cysteine 61. Glutamate 63 is subject to Glutamic acid 1-amide.

As to expression, expressed by the venom duct.

The protein resides in the secreted. Probable neurotoxin with unknown target. Possibly targets ion channels. This is Conotoxin Cal16.1 from Californiconus californicus (California cone).